Here is a 297-residue protein sequence, read N- to C-terminus: MKDQLQPGVSLALLTAYQVGGPAEWYLQPTKAEVLDEALGWARRSELPVTVIGAGTNLLISDVGIGGLVVHLRSWRGTQILEEGLIEVKAGESIAALAFQTARRGWAGLEWAVGVPGSIGGAVVMNAGAHGAQFSDTLESVEVLTETGERRRVAAGELGLTYRSSLLQQRDWVVLSARLRLAPGHQPARLIEHIDEFNTFRHRTQPSGFPNCGSVFRNPGGEKKAGWMLDRSGLKGQSVGAAQVAEQHANFILNRGGATARDILTLMTRMRDRVVADWGIALKPEVRFLGRGLNWAG.

In terms of domain architecture, FAD-binding PCMH-type spans 18-184 (QVGGPAEWYL…LSARLRLAPG (167 aa)). Arg-163 is an active-site residue. The active-site Proton donor is the Ser-214. The active site involves Glu-285.

Requires FAD as cofactor.

The protein resides in the cytoplasm. The enzyme catalyses UDP-N-acetyl-alpha-D-muramate + NADP(+) = UDP-N-acetyl-3-O-(1-carboxyvinyl)-alpha-D-glucosamine + NADPH + H(+). The protein operates within cell wall biogenesis; peptidoglycan biosynthesis. Functionally, cell wall formation. The chain is UDP-N-acetylenolpyruvoylglucosamine reductase from Gloeobacter violaceus (strain ATCC 29082 / PCC 7421).